A 121-amino-acid polypeptide reads, in one-letter code: Ribosome-binding factor A (121 aa).

This sequence belongs to the RbfA family. Monomer. Binds 30S ribosomal subunits, but not 50S ribosomal subunits or 70S ribosomes.

The protein resides in the cytoplasm. Its function is as follows. One of several proteins that assist in the late maturation steps of the functional core of the 30S ribosomal subunit. Associates with free 30S ribosomal subunits (but not with 30S subunits that are part of 70S ribosomes or polysomes). Required for efficient processing of 16S rRNA. May interact with the 5'-terminal helix region of 16S rRNA. In Clostridium tetani (strain Massachusetts / E88), this protein is Ribosome-binding factor A.